Reading from the N-terminus, the 342-residue chain is Isopentenyl-diphosphate delta-isomerase (342 aa).

Position 12-13 (12-13 (RK)) interacts with substrate. Residues 71–73 (AMT), Ser101, and Asn129 contribute to the FMN site. 101–103 (SQR) provides a ligand contact to substrate. Gln163 contributes to the substrate binding site. Glu164 contacts Mg(2+). FMN-binding positions include Lys195, Thr225, 272-274 (GIR), and 293-294 (AR).

It belongs to the IPP isomerase type 2 family. In terms of assembly, homooctamer. Dimer of tetramers. FMN serves as cofactor. It depends on NADPH as a cofactor. Requires Mg(2+) as cofactor.

Its subcellular location is the cytoplasm. It carries out the reaction isopentenyl diphosphate = dimethylallyl diphosphate. In terms of biological role, involved in the biosynthesis of isoprenoids. Catalyzes the 1,3-allylic rearrangement of the homoallylic substrate isopentenyl (IPP) to its allylic isomer, dimethylallyl diphosphate (DMAPP). In Mycolicibacterium vanbaalenii (strain DSM 7251 / JCM 13017 / BCRC 16820 / KCTC 9966 / NRRL B-24157 / PYR-1) (Mycobacterium vanbaalenii), this protein is Isopentenyl-diphosphate delta-isomerase.